We begin with the raw amino-acid sequence, 348 residues long: Nicotinate-nucleotide--dimethylbenzimidazole phosphoribosyltransferase (348 aa).

E316 acts as the Proton acceptor in catalysis.

It belongs to the CobT family.

It carries out the reaction 5,6-dimethylbenzimidazole + nicotinate beta-D-ribonucleotide = alpha-ribazole 5'-phosphate + nicotinate + H(+). It participates in nucleoside biosynthesis; alpha-ribazole biosynthesis; alpha-ribazole from 5,6-dimethylbenzimidazole: step 1/2. In terms of biological role, catalyzes the synthesis of alpha-ribazole-5'-phosphate from nicotinate mononucleotide (NAMN) and 5,6-dimethylbenzimidazole (DMB). This chain is Nicotinate-nucleotide--dimethylbenzimidazole phosphoribosyltransferase, found in Xanthomonas euvesicatoria pv. vesicatoria (strain 85-10) (Xanthomonas campestris pv. vesicatoria).